We begin with the raw amino-acid sequence, 91 residues long: RNA-binding protein Hfq (91 aa).

The Sm domain maps to 9-68; the sequence is DPFLNALRRERVPVSVYLVNGIKLQGTIESFDQFVVLLRNTVSQMVYKHAISTVVPARNV.

It belongs to the Hfq family. As to quaternary structure, homohexamer.

In terms of biological role, RNA chaperone that binds small regulatory RNA (sRNAs) and mRNAs to facilitate mRNA translational regulation in response to envelope stress, environmental stress and changes in metabolite concentrations. Also binds with high specificity to tRNAs. This is RNA-binding protein Hfq from Stenotrophomonas maltophilia (strain K279a).